The primary structure comprises 193 residues: Probable type II restriction enzyme HpyAORF263P (193 aa).

The protein belongs to the BsaWI type II restriction endonuclease family.

The enzyme catalyses Endonucleolytic cleavage of DNA to give specific double-stranded fragments with terminal 5'-phosphates.. Its function is as follows. A P subtype probable restriction enzyme that recognizes the double-stranded sequence CCGG; the cleavage site is unknown. This is Probable type II restriction enzyme HpyAORF263P from Helicobacter pylori (strain ATCC 700392 / 26695) (Campylobacter pylori).